Here is a 197-residue protein sequence, read N- to C-terminus: Putative NADH dehydrogenase/NAD(P)H nitroreductase Lcho_1290 (197 aa).

Belongs to the nitroreductase family. HadB/RutE subfamily. FMN serves as cofactor.

The chain is Putative NADH dehydrogenase/NAD(P)H nitroreductase Lcho_1290 from Leptothrix cholodnii (strain ATCC 51168 / LMG 8142 / SP-6) (Leptothrix discophora (strain SP-6)).